Here is a 545-residue protein sequence, read N- to C-terminus: Chaperonin GroEL 1 (545 aa).

ATP-binding positions include 30–33, lysine 51, 87–91, glycine 415, 479–481, and aspartate 495; these read TLGP, DGTTT, and NAA.

It belongs to the chaperonin (HSP60) family. In terms of assembly, forms a cylinder of 14 subunits composed of two heptameric rings stacked back-to-back. Interacts with the co-chaperonin GroES.

The protein resides in the cytoplasm. It carries out the reaction ATP + H2O + a folded polypeptide = ADP + phosphate + an unfolded polypeptide.. Functionally, together with its co-chaperonin GroES, plays an essential role in assisting protein folding. The GroEL-GroES system forms a nano-cage that allows encapsulation of the non-native substrate proteins and provides a physical environment optimized to promote and accelerate protein folding. The chain is Chaperonin GroEL 1 from Methylococcus capsulatus (strain ATCC 33009 / NCIMB 11132 / Bath).